The chain runs to 71 residues: Lantibiotic Flvbeta.c (71 aa).

Positions 1–33 (MENKFDMEKFKKLAAVVSEDELDTLLDETTVGA) are cleaved as a propeptide — cleaved by FlvT. The segment at residues 35-39 (SSNDC) is a cross-link (lanthionine (Ser-Cys); by FlvM2). The residue at position 36 (S36) is a 2,3-didehydroalanine (Ser); by FlvM2. 3 consecutive cross-links (beta-methyllanthionine (Thr-Cys); by FlvM2) follow at residues 54–60 (TSKFDWC), 62–65 (TGAC), and 66–69 (TTSC).

Contains LL-lanthionine and DL-beta-methyllanthionine, when coepressed in E.coli with the flavecin synthetase FlvM2.

The protein resides in the secreted. In terms of biological role, lanthionine-containing peptide antibiotic (lantibiotic) that is probably active on Gram-positive bacteria, since its analog [Del1]Flvbeta.c shows antibacterial activity against M.luteus. This activity is not synergistically enhanced by [Del2]Flvalpha.a, an analog of Flvalpha.a, which is encoded by the same operon than Flvbeta.c. The bactericidal activity of lantibiotics is based on depolarization of energized bacterial cytoplasmic membranes, initiated by the formation of aqueous transmembrane pores. This is Lantibiotic Flvbeta.c from Ruminococcus flavefaciens.